The following is a 375-amino-acid chain: Actin-binding Rho-activating protein (375 aa).

Residues 37 to 101 form a disordered region; it reads ANENSTRQAQ…ATEVSHIKRK (65 aa). Over residues 80 to 101 the composition is skewed to basic and acidic residues; the sequence is PDGDREGRGSEEATEVSHIKRK. Phosphoserine occurs at positions 150 and 182. The interval 175 to 197 is disordered; sequence EPKWKSDSIDTEDSGYGGDMEER. Actin-binding regions lie at residues 193–293 and 294–375; these read DMEE…AERA and KRAE…TLLE. Interaction with actin regions lie at residues 234-279 and 346-375; these read SQVD…GDEG and MRARKHGLVHFEGEMLWQGKDDHVVITLLE.

As to quaternary structure, binds F-actin and ABLIM1, ABLIM2 and ABLIM3. Interaction with ABLIM2 and ABLIM3 enhances activity. Predominantly expressed in heart and skeletal muscle, and expressed at lower levels in adrenal gland, brain, kidney, liver, and testis.

It localises to the cytoplasm. The protein localises to the myofibril. The protein resides in the sarcomere. It is found in the cytoskeleton. Acts as an activator of serum response factor (SRF)-dependent transcription possibly by inducing nuclear translocation of MKL1 or MKL2 and through a mechanism requiring Rho-actin signaling. This Rattus norvegicus (Rat) protein is Actin-binding Rho-activating protein.